We begin with the raw amino-acid sequence, 1293 residues long: DNA-directed RNA polymerase subunit beta' (1293 aa).

Zn(2+) is bound by residues Cys60, Cys62, Cys75, and Cys78. Asp535, Asp537, and Asp539 together coordinate Mg(2+). Zn(2+) contacts are provided by Cys873, Cys950, Cys957, and Cys960.

Belongs to the RNA polymerase beta' chain family. In terms of assembly, the RNAP catalytic core consists of 2 alpha, 1 beta, 1 beta' and 1 omega subunit. When a sigma factor is associated with the core the holoenzyme is formed, which can initiate transcription. Mg(2+) serves as cofactor. Requires Zn(2+) as cofactor.

The enzyme catalyses RNA(n) + a ribonucleoside 5'-triphosphate = RNA(n+1) + diphosphate. Its function is as follows. DNA-dependent RNA polymerase catalyzes the transcription of DNA into RNA using the four ribonucleoside triphosphates as substrates. The chain is DNA-directed RNA polymerase subunit beta' from Cutibacterium acnes (strain DSM 16379 / KPA171202) (Propionibacterium acnes).